A 463-amino-acid polypeptide reads, in one-letter code: Glutamate--tRNA ligase 1 (463 aa).

A 'HIGH' region motif is present at residues 10–20 (PSPTGYLHIGG). A 'KMSKS' region motif is present at residues 238 to 242 (KLSKR). K241 is an ATP binding site.

This sequence belongs to the class-I aminoacyl-tRNA synthetase family. Glutamate--tRNA ligase type 1 subfamily. As to quaternary structure, monomer.

Its subcellular location is the cytoplasm. It carries out the reaction tRNA(Glu) + L-glutamate + ATP = L-glutamyl-tRNA(Glu) + AMP + diphosphate. Catalyzes the attachment of glutamate to tRNA(Glu) in a two-step reaction: glutamate is first activated by ATP to form Glu-AMP and then transferred to the acceptor end of tRNA(Glu). The chain is Glutamate--tRNA ligase 1 from Helicobacter pylori (strain J99 / ATCC 700824) (Campylobacter pylori J99).